The chain runs to 523 residues: UDP-glucuronosyltransferase 3A1 (523 aa).

The N-terminal stretch at 1–22 (MVGQRVLLLVAFLLSGVLLSEA) is a signal peptide. The Extracellular segment spans residues 23-483 (AKILTISTLG…YAFQQPWHEQ (461 aa)). Asn52 carries N-linked (GlcNAc...) asparagine glycosylation. The chain crosses the membrane as a helical span at residues 484–504 (YLIDVFVFLLGLTLGTMWLCG). Topologically, residues 505 to 523 (KLLGVVARWLRGARKVKKT) are cytoplasmic.

The protein belongs to the UDP-glycosyltransferase family.

It localises to the membrane. It carries out the reaction glucuronate acceptor + UDP-alpha-D-glucuronate = acceptor beta-D-glucuronoside + UDP + H(+). UDP-glucuronosyltransferases catalyze phase II biotransformation reactions in which lipophilic substrates are conjugated with glucuronic acid to increase water solubility and enhance excretion. They are of major importance in the conjugation and subsequent elimination of potentially toxic xenobiotics and endogenous compounds. The protein is UDP-glucuronosyltransferase 3A1 (UGT3A1) of Homo sapiens (Human).